A 296-amino-acid chain; its full sequence is Small ribosomal subunit protein uS2 (296 aa).

The span at 274-284 (ASSAAPADTWA) shows a compositional bias: low complexity. The interval 274–296 (ASSAAPADTWAGESGNPDAGVKW) is disordered.

It belongs to the universal ribosomal protein uS2 family. Component of the small ribosomal subunit. Mature ribosomes consist of a small (40S) and a large (60S) subunit. The 40S subunit contains about 33 different proteins and 1 molecule of RNA (18S). The 60S subunit contains about 49 different proteins and 3 molecules of RNA (25S, 5.8S and 5S). Interacts with RPS21.

The protein localises to the cytoplasm. Its function is as follows. Required for the assembly and/or stability of the 40S ribosomal subunit. Required for the processing of the 20S rRNA-precursor to mature 18S rRNA in a late step of the maturation of 40S ribosomal subunits. This chain is Small ribosomal subunit protein uS2, found in Ajellomyces capsulatus (strain G186AR / H82 / ATCC MYA-2454 / RMSCC 2432) (Darling's disease fungus).